The following is a 433-amino-acid chain: Tubulin epsilon and delta complex protein 2 (433 aa).

3 disordered regions span residues 45–69, 95–169, and 326–345; these read TGTRALKPPPGPETNGEDPLPACTP, TKAG…VGMG, and QPPRPCPVGRPPGASPSCGG. Over residues 107-120 the composition is skewed to polar residues; it reads KSRSIVTSSGTTAS. Ser-159 carries the post-translational modification Phosphoserine. The span at 327–339 shows a compositional bias: pro residues; it reads PPRPCPVGRPPGA.

Interacts with TEDC1. Found in a complex with TEDC1, TEDC2, TUBE1 and TUBD1.

It is found in the cell projection. It localises to the cilium. The protein localises to the cytoplasm. The protein resides in the cytoskeleton. Its subcellular location is the microtubule organizing center. It is found in the centrosome. It localises to the centriole. Functionally, acts as a positive regulator of ciliary hedgehog signaling. Required for centriole stability. In Homo sapiens (Human), this protein is Tubulin epsilon and delta complex protein 2.